The following is a 385-amino-acid chain: Trichodiene synthase (385 aa).

This sequence belongs to the trichodiene synthase family.

The catalysed reaction is (2E,6E)-farnesyl diphosphate = trichodiene + diphosphate. Its pathway is sesquiterpene biosynthesis; trichothecene biosynthesis. In terms of biological role, TS is a member of the terpene cyclase group of enzymes. It catalyzes the isomerization and cyclization of farnesyl pyro-phosphate to form trichodiene, the first cyclic intermediate in the biosynthetic pathway for trichothecenes. It serves to branch trichothecene biosynthesis from the isoprenoid pathway. In Paramyrothecium roridum (Myrothecium leaf spot fungus), this protein is Trichodiene synthase (TRI5).